A 653-amino-acid polypeptide reads, in one-letter code: Sodium-dependent phosphate transporter 2 (653 aa).

At 1–5 (MVLDE) the chain is on the extracellular side. A helical transmembrane segment spans residues 6–26 (YMWMVIVGFIIAFVLAFSVGA). Residues 27-46 (NDVANSFGTAVGSGVVTLRQ) lie on the Cytoplasmic side of the membrane. A helical membrane pass occupies residues 47-67 (ACILASIFETIGSVLLGAKVG). Topologically, residues 68–86 (ETIRKGIIDVNLYNNTVDL) are extracellular. The N-linked (GlcNAc...) asparagine glycan is linked to Asn-81. A helical transmembrane segment spans residues 87–107 (LMAGEVSAMVGSAVWQLIASF). The Cytoplasmic segment spans residues 108-109 (LK). Residues 110–130 (LPVSGTHCIVGATIGFSLVAV) form a helical membrane-spanning segment. Over 131 to 142 (GAHSVQWMQLVK) the chain is Extracellular. Residues 143–163 (IVASWFISPLLSGLMSGALFL) form a helical membrane-spanning segment. Topologically, residues 164–187 (MIKFFILNKEDPVPNGLKALPVFY) are cytoplasmic. Residues 188–208 (AATIGINVFSILFTGAPLLGL) form a helical membrane-spanning segment. The Extracellular portion of the chain corresponds to 209–217 (QTFPVWATA). Residues 218–238 (LLSVGIAIVFALVVWFFVCPW) traverse the membrane as a helical segment. Residues 239–483 (MKKKIASRLK…EDKEEKDKSQ (245 aa)) lie on the Cytoplasmic side of the membrane. Residues 275-310 (LPGAKGNDESVLPLTSSSPDAAVSSESVSNGNTRVP) form a disordered region. Over residues 290–303 (SSSPDAAVSSESVS) the composition is skewed to low complexity. Residues 484–504 (VHLLFHFLQILTACFGSFAHG) form a helical membrane-spanning segment. Topologically, residues 505 to 532 (GNDVSNAIGPLVALWLIYQQGGVMQEAS) are extracellular. A helical membrane pass occupies residues 533–553 (TPVWLLLYGGVGICAGLWVWG). The Cytoplasmic segment spans residues 554-572 (RRVIQTMGKDLTPITPSSG). A helical transmembrane segment spans residues 573 to 587 (FTIELASAFTVVVAS). The Extracellular portion of the chain corresponds to 588-594 (NIGLPIS). The chain crosses the membrane as a helical span at residues 595-610 (TTHCKVGSVVAVGWIR). The Cytoplasmic portion of the chain corresponds to 611-622 (SRKAVDWRLFRN). The helical transmembrane segment at 623 to 643 (IFLAWFVTVPVAGLFSAGVMA) threads the bilayer. At 644-653 (ILQYGILPYV) the chain is on the extracellular side.

The protein belongs to the inorganic phosphate transporter (PiT) (TC 2.A.20) family. In terms of assembly, homodimer.

Its subcellular location is the cell membrane. It localises to the apical cell membrane. The enzyme catalyses 2 Na(+)(out) + phosphate(out) = 2 Na(+)(in) + phosphate(in). In terms of biological role, sodium-phosphate symporter which preferentially transports the monovalent form of phosphate with a stoichiometry of two sodium ions per phosphate ion. This chain is Sodium-dependent phosphate transporter 2 (slc20a2), found in Xenopus laevis (African clawed frog).